Reading from the N-terminus, the 347-residue chain is Dual specificity mitogen-activated protein kinase kinase 3 (347 aa).

Met1 carries the post-translational modification N-acetylmethionine. Over residues 1 to 11 (MESPAASPPAS) the composition is skewed to pro residues. The disordered stretch occupies residues 1-45 (MESPAASPPASLPQTKGKSKRKKDLRISCVSKPPVSNPTPPRNLD). Residue Ser3 is modified to Phosphoserine. Residues 64–325 (LVTISELGRG…YLELMEHPFF (262 aa)) form the Protein kinase domain. ATP is bound by residues 70–78 (LGRGAYGVV) and Lys93. Asp190 acts as the Proton acceptor in catalysis. Ser218 is modified (phosphoserine). Position 222 is a phosphothreonine (Thr222).

Belongs to the protein kinase superfamily. STE Ser/Thr protein kinase family. MAP kinase kinase subfamily. As to quaternary structure, component of a signaling complex containing at least AKAP13, PKN1, MAPK14, ZAK and MAP2K3. Within this complex, AKAP13 interacts directly with PKN1, which in turn recruits MAPK14, MAP2K3 and ZAK. Binds to DYRK1B/MIRK and increases its kinase activity. Part of a complex with MAP3K3, RAC1 and CCM2. Interacts with ARRB1. In terms of processing, autophosphorylated. Phosphorylation on Ser-218 and Thr-222 by MAP kinase kinase kinases positively regulates the kinase activity. Phosphorylated by TAOK2.

It carries out the reaction L-seryl-[protein] + ATP = O-phospho-L-seryl-[protein] + ADP + H(+). The catalysed reaction is L-threonyl-[protein] + ATP = O-phospho-L-threonyl-[protein] + ADP + H(+). It catalyses the reaction L-tyrosyl-[protein] + ATP = O-phospho-L-tyrosyl-[protein] + ADP + H(+). Its activity is regulated as follows. Activated by dual phosphorylation on Ser-218 and Thr-222. Functionally, dual specificity kinase. Is activated by cytokines and environmental stress in vivo. Catalyzes the concomitant phosphorylation of a threonine and a tyrosine residue in the MAP kinase p38. Part of a signaling cascade that begins with the activation of the adrenergic receptor ADRA1B and leads to the activation of MAPK14. This is Dual specificity mitogen-activated protein kinase kinase 3 (Map2k3) from Mus musculus (Mouse).